A 233-amino-acid polypeptide reads, in one-letter code: Purine nucleoside phosphorylase DeoD-type (233 aa).

His-4 contacts a purine D-ribonucleoside. Phosphate is bound by residues Gly-20, Arg-24, Arg-43, and 87–90 (RIGT). A purine D-ribonucleoside-binding positions include 179 to 181 (EME) and 203 to 204 (SD). The Proton donor role is filled by Asp-204.

The protein belongs to the PNP/UDP phosphorylase family. Homohexamer; trimer of homodimers.

The catalysed reaction is a purine D-ribonucleoside + phosphate = a purine nucleobase + alpha-D-ribose 1-phosphate. It catalyses the reaction a purine 2'-deoxy-D-ribonucleoside + phosphate = a purine nucleobase + 2-deoxy-alpha-D-ribose 1-phosphate. Its function is as follows. Catalyzes the reversible phosphorolytic breakdown of the N-glycosidic bond in the beta-(deoxy)ribonucleoside molecules, with the formation of the corresponding free purine bases and pentose-1-phosphate. The protein is Purine nucleoside phosphorylase DeoD-type of Helicobacter pylori (strain J99 / ATCC 700824) (Campylobacter pylori J99).